Consider the following 198-residue polypeptide: MNLIPTVIEQTSRGERAYDIYSRLLKDRIIMLGSAIDDNVANSIVSQLLFLDAQDPEKDIFLYINSPGGSISAGMAIYDTMNFVKADVQTIGMGMAASMGSFLLTAGANGKRFALPNAEIMIHQPLGGAQGQATEIEIAARHILKIKERMNTIMAEKTGQPYEVIARDTDRDNFMTAQEAKDYGLIDDIIVNKSGLKG.

The active-site Nucleophile is the Ser-98. The active site involves His-123.

It belongs to the peptidase S14 family. In terms of assembly, fourteen ClpP subunits assemble into 2 heptameric rings which stack back to back to give a disk-like structure with a central cavity, resembling the structure of eukaryotic proteasomes.

The protein localises to the cytoplasm. The catalysed reaction is Hydrolysis of proteins to small peptides in the presence of ATP and magnesium. alpha-casein is the usual test substrate. In the absence of ATP, only oligopeptides shorter than five residues are hydrolyzed (such as succinyl-Leu-Tyr-|-NHMec, and Leu-Tyr-Leu-|-Tyr-Trp, in which cleavage of the -Tyr-|-Leu- and -Tyr-|-Trp bonds also occurs).. Cleaves peptides in various proteins in a process that requires ATP hydrolysis. Has a chymotrypsin-like activity. Plays a major role in the degradation of misfolded proteins. The sequence is that of ATP-dependent Clp protease proteolytic subunit from Listeria innocua serovar 6a (strain ATCC BAA-680 / CLIP 11262).